The following is a 323-amino-acid chain: tRNA N6-adenosine threonylcarbamoyltransferase (323 aa).

3 residues coordinate Fe cation: histidine 105, histidine 109, and tyrosine 126. Substrate is bound by residues 126–130 (YVSGG), aspartate 158, glycine 171, glutamate 175, and asparagine 255. Position 283 (aspartate 283) interacts with Fe cation.

Belongs to the KAE1 / TsaD family. Monomer. Component of the KEOPS complex that consists of Kae1, Bud32, Cgi121 and Pcc1; the whole complex dimerizes. Fe(2+) serves as cofactor.

The protein resides in the cytoplasm. It carries out the reaction L-threonylcarbamoyladenylate + adenosine(37) in tRNA = N(6)-L-threonylcarbamoyladenosine(37) in tRNA + AMP + H(+). Required for the formation of a threonylcarbamoyl group on adenosine at position 37 (t(6)A37) in tRNAs that read codons beginning with adenine. Is a component of the KEOPS complex that is probably involved in the transfer of the threonylcarbamoyl moiety of threonylcarbamoyl-AMP (TC-AMP) to the N6 group of A37. Kae1 likely plays a direct catalytic role in this reaction, but requires other protein(s) of the complex to fulfill this activity. The sequence is that of tRNA N6-adenosine threonylcarbamoyltransferase from Archaeoglobus fulgidus (strain ATCC 49558 / DSM 4304 / JCM 9628 / NBRC 100126 / VC-16).